Consider the following 564-residue polypeptide: Glutamyl-tRNA(Gln) amidotransferase subunit B, mitochondrial (564 aa).

Residues 1–88 constitute a mitochondrion transit peptide; that stretch reads MIRQCVSHRG…DTDAKLFSRA (88 aa). Positions 26–63 are disordered; sequence PFHHPSPRPLGRKNWSTSDEAKSKRAAMRKGGAPPPEH.

Belongs to the GatB/GatE family. GatB subfamily. As to quaternary structure, subunit of the heterotrimeric GatCAB amidotransferase (AdT) complex, composed of A, B and C subunits.

It localises to the mitochondrion. It carries out the reaction L-glutamyl-tRNA(Gln) + L-glutamine + ATP + H2O = L-glutaminyl-tRNA(Gln) + L-glutamate + ADP + phosphate + H(+). In terms of biological role, allows the formation of correctly charged Gln-tRNA(Gln) through the transamidation of misacylated Glu-tRNA(Gln) in the mitochondria. The reaction takes place in the presence of glutamine and ATP through an activated gamma-phospho-Glu-tRNA(Gln). The protein is Glutamyl-tRNA(Gln) amidotransferase subunit B, mitochondrial of Ajellomyces capsulatus (strain G186AR / H82 / ATCC MYA-2454 / RMSCC 2432) (Darling's disease fungus).